The following is a 346-amino-acid chain: Elongation factor Ts (346 aa).

Residues 80–83 are involved in Mg(2+) ion dislocation from EF-Tu; the sequence is TDFV.

This sequence belongs to the EF-Ts family.

Its subcellular location is the cytoplasm. Associates with the EF-Tu.GDP complex and induces the exchange of GDP to GTP. It remains bound to the aminoacyl-tRNA.EF-Tu.GTP complex up to the GTP hydrolysis stage on the ribosome. The sequence is that of Elongation factor Ts from Streptococcus pyogenes serotype M18 (strain MGAS8232).